Consider the following 416-residue polypeptide: Homogentisate 1,2-dioxygenase (416 aa).

His-275 acts as the Proton acceptor in catalysis. The Fe cation site is built by His-318 and Glu-324. Residues Tyr-333 and His-354 each coordinate homogentisate. Fe cation is bound at residue His-354.

Belongs to the homogentisate dioxygenase family. As to quaternary structure, hexamer; dimer of trimers. Fe cation serves as cofactor.

It carries out the reaction homogentisate + O2 = 4-maleylacetoacetate + H(+). It participates in amino-acid degradation; L-phenylalanine degradation; acetoacetate and fumarate from L-phenylalanine: step 4/6. Its function is as follows. Involved in the catabolism of homogentisate (2,5-dihydroxyphenylacetate or 2,5-OH-PhAc), a central intermediate in the degradation of phenylalanine and tyrosine. Catalyzes the oxidative ring cleavage of the aromatic ring of homogentisate to yield maleylacetoacetate. The chain is Homogentisate 1,2-dioxygenase from Legionella pneumophila (strain Lens).